A 440-amino-acid polypeptide reads, in one-letter code: Acetylornithine deacetylase (440 aa).

Histidine 101 contacts Zn(2+). Aspartate 103 is an active-site residue. A Zn(2+)-binding site is contributed by aspartate 133. Glutamate 167 serves as the catalytic Proton acceptor. Positions 168 and 412 each coordinate Zn(2+).

This sequence belongs to the peptidase M20A family. ArgE subfamily. In terms of assembly, homodimer. The cofactor is Zn(2+). Requires Co(2+) as cofactor.

The enzyme catalyses N(2)-acetyl-L-ornithine + H2O = L-ornithine + acetate. It functions in the pathway amino-acid biosynthesis; L-arginine biosynthesis; L-ornithine from N(2)-acetyl-L-ornithine (linear): step 1/1. This chain is Acetylornithine deacetylase, found in Arabidopsis thaliana (Mouse-ear cress).